Here is a 253-residue protein sequence, read N- to C-terminus: Triosephosphate isomerase (253 aa).

9–11 (NWK) provides a ligand contact to substrate. Catalysis depends on His-97, which acts as the Electrophile. The active-site Proton acceptor is the Glu-169. Substrate contacts are provided by residues Gly-175, Ser-215, and 236–237 (GG).

The protein belongs to the triosephosphate isomerase family. Homodimer.

Its subcellular location is the cytoplasm. The enzyme catalyses D-glyceraldehyde 3-phosphate = dihydroxyacetone phosphate. Its pathway is carbohydrate biosynthesis; gluconeogenesis. It functions in the pathway carbohydrate degradation; glycolysis; D-glyceraldehyde 3-phosphate from glycerone phosphate: step 1/1. Its function is as follows. Involved in the gluconeogenesis. Catalyzes stereospecifically the conversion of dihydroxyacetone phosphate (DHAP) to D-glyceraldehyde-3-phosphate (G3P). The sequence is that of Triosephosphate isomerase from Staphylococcus aureus (strain NCTC 8325 / PS 47).